Reading from the N-terminus, the 1036-residue chain is UDP-N-acetylglucosamine--peptide N-acetylglucosaminyltransferase 110 kDa subunit (1036 aa).

At A2 the chain carries N-acetylalanine. 2 positions are modified to phosphoserine; by GSK3-beta; alternate: S3 and S4. O-linked (GlcNAc) serine; alternate glycans are attached at residues S3 and S4. 12 TPR repeats span residues 11 to 44 (STGLAELAHREYQAGDFEAAERHCMQLWRQEPDN), 79 to 112 (AEAYSNLGNVYKERGQLQEAIEHYRHALRLKPDF), 113 to 146 (IDGYINLAAALVAAGDMEGAVQAYVSALQYNPDL), 147 to 180 (YCVRSDLGNLLKALGRLEEAKACYLKAIETQPNF), 181 to 214 (AVAWSNLGCVFNAQGEIWLAIHHFEKAVTLDPNF), 215 to 248 (LDAYINLGNVLKEARIFDRAVAAYLRALSLSPNH), 249 to 282 (AVVHGNLACVYYEQGLIDLAIDTYRRAIELQPHF), 283 to 316 (PDAYCNLANALKEKGSVAEAEDCYNTALRLCPTH), 317 to 350 (ADSLNNLANIKREQGNIEEAVRLYRKALEVFPEF), 351 to 384 (AAAHSNLASVLQQQGKLQEALMHYKEAIRISPTF), 385 to 418 (ADAYSNMGNTLKEMQDVQGALQCYTRAIQINPAF), and 419 to 452 (ADAHSNLASIHKDSGNIPEAIASYRTALKLKPDF). S389 is a glycosylation site (O-linked (GlcNAc) serine; by autocatalysis). T444 carries the post-translational modification Phosphothreonine. A TPR 13; truncated repeat occupies 453-463 (PDAYCNLAHCL). A DFP motif motif is present at residues 454–456 (DAY). Residues 478-493 (KLVSIVAEQLEKNRLP) carry the Nuclear localization signal motif. The Proton acceptor role is filled by H498. Residues Q839, K842, 896–898 (APK), 901–904 (HVRR), 920–922 (HTT), and D925 each bind UDP. Phosphotyrosine is present on Y979. A required for phosphatidylinositol 3,4,5-triphosphate binding region spans residues 981–1000 (KKIRGKVWKQRISSPLFNTK).

Belongs to the glycosyltransferase 41 family. O-GlcNAc transferase subfamily. As to quaternary structure, monomer; may exist in different oligomerization states in cells. Homotrimer, oligomerizes via TPR repeats 6 and 7. Trimerization is not necessary for activity in vitro, however it increases affinity for UDP-GlcNAc. A heterotrimer consisting of two 110 kDa subunits and one highly related 78 kDa subunit is isolated from liver. Component of a THAP1/THAP3-HCFC1-OGT complex. Component of the NSL complex at least composed of MOF/KAT8, KANSL1, KANSL2, KANSL3, MCRS1, PHF20, OGT1/OGT, WDR5 and HCFC1. Found in a complex with KIF5B, RHOT1, RHOT2 and TRAK1. Found in a complex composed of at least SINHCAF, SIN3A, HDAC1, SAP30, RBBP4, OGT and TET1. Component of a complex composed of KMT2E/MLL5, OGT and USP7; the complex stabilizes KMT2E/MLL5, preventing KMT2E/MLL5 ubiquitination and proteasomal-mediated degradation. Interacts (via TPRs 1-6) with SIN3A; the interaction mediates transcriptional repression in parallel with histone deacetylase. Interacts (via TPR 5-6) with TET1, TET2 and TET3. Interacts (via TPR repeats 6 and 7) with ATXN10. Interacts with NSD2. Interacts with PROSER1; this interaction mediates TET2 O-GlcNAcylation and stability by promoting the interaction between OGT and TET2. Several different immunologically-related forms of this protein are found in different tissues (with apparent molecular weights of 110, 80 and 78 kDa); they are probably the result of alternative splicing and/or proteolysis. In terms of processing, O-glycosylated; contains O-GlcNAc. Both p110 and p78 forms are O-glycosylated. Post-translationally, ubiquitinated by the SCF(FBXO31) complex, leading to its proteasomal degradation. Phosphorylation on Ser-3 or Ser-4 by GSK3-beta positively regulates its activity. Phosphorylation at Thr-444 by AMPK promotes nuclear localization. In terms of processing, glycosylated via autocatalysis; O-GlcNAcylation at Ser-389 promotes nuclear localization. In terms of tissue distribution, expressed in brain, heart, liver, thymus, muscle, lung, spleen, uterus and ovary; in the kidney only an immunologically-related 78 kDa band is present, which is also present in liver and muscle. In the pancreas, expressed in both exocrine acinar cells and in endocrine cells of the islets of Langerhans.

The protein localises to the cytoplasm. It localises to the nucleus. It is found in the cell membrane. Its subcellular location is the mitochondrion membrane. The protein resides in the cell projection. The catalysed reaction is L-seryl-[protein] + UDP-N-acetyl-alpha-D-glucosamine = 3-O-(N-acetyl-beta-D-glucosaminyl)-L-seryl-[protein] + UDP + H(+). It catalyses the reaction L-threonyl-[protein] + UDP-N-acetyl-alpha-D-glucosamine = 3-O-(N-acetyl-beta-D-glucosaminyl)-L-threonyl-[protein] + UDP + H(+). It functions in the pathway protein modification; protein glycosylation. With respect to regulation, inhibited by UDP, UTP and UDP-GlcNAc; 50 mM NaCl or KCl inhibit activity about 70%. In terms of biological role, catalyzes the transfer of a single N-acetylglucosamine from UDP-GlcNAc to a serine or threonine residue in cytoplasmic and nuclear proteins resulting in their modification with a beta-linked N-acetylglucosamine (O-GlcNAc). Glycosylates a large and diverse number of proteins including histone H2B, AKT1, AMPK, ATG4B, CAPRIN1, EZH2, FNIP1, GSDMD, KRT7, LMNA, LMNB1, LMNB2, RPTOR, HOXA1, PFKL, KMT2E/MLL5, MAPT/TAU, TET2, RBL2, RET, NOD2 and HCFC1. Can regulate their cellular processes via cross-talk between glycosylation and phosphorylation or by affecting proteolytic processing. Involved in insulin resistance in muscle and adipocyte cells via glycosylating insulin signaling components and inhibiting the 'Thr-308' phosphorylation of AKT1, enhancing IRS1 phosphorylation and attenuating insulin signaling. Involved in glycolysis regulation by mediating glycosylation of 6-phosphofructokinase PFKL, inhibiting its activity. Plays a key role in chromatin structure by mediating O-GlcNAcylation of 'Ser-112' of histone H2B: recruited to CpG-rich transcription start sites of active genes via its interaction with TET proteins (TET1, TET2 or TET3). As part of the NSL complex indirectly involved in acetylation of nucleosomal histone H4 on several lysine residues. O-GlcNAcylation of 'Ser-75' of EZH2 increases its stability, and facilitating the formation of H3K27me3 by the PRC2/EED-EZH2 complex. Stabilizes KMT2E/MLL5 by mediating its glycosylation, thereby preventing KMT2E/MLL5 ubiquitination. Regulates circadian oscillation of the clock genes and glucose homeostasis in the liver. Stabilizes clock proteins BMAL1 and CLOCK through O-glycosylation, which prevents their ubiquitination and subsequent degradation. Promotes the CLOCK-BMAL1-mediated transcription of genes in the negative loop of the circadian clock such as PER1/2 and CRY1/2. O-glycosylates HCFC1 and regulates its proteolytic processing and transcriptional activity. Component of a THAP1/THAP3-HCFC1-OGT complex that is required for the regulation of the transcriptional activity of RRM1. Regulates mitochondrial motility in neurons by mediating glycosylation of TRAK1. Promotes autophagy by mediating O-glycosylation of ATG4B. Acts as a regulator of mTORC1 signaling by mediating O-glycosylation of RPTOR and FNIP1: O-GlcNAcylation of RPTOR in response to glucose sufficiency promotes activation of the mTORC1 complex. The polypeptide is UDP-N-acetylglucosamine--peptide N-acetylglucosaminyltransferase 110 kDa subunit (Ogt) (Rattus norvegicus (Rat)).